Here is an 87-residue protein sequence, read N- to C-terminus: Small ribosomal subunit protein bS20 (87 aa).

A disordered region spans residues 1-24 (MANTAQARKRARQSVERNKHNSSL).

The protein belongs to the bacterial ribosomal protein bS20 family.

In terms of biological role, binds directly to 16S ribosomal RNA. The polypeptide is Small ribosomal subunit protein bS20 (Bordetella avium (strain 197N)).